We begin with the raw amino-acid sequence, 338 residues long: 5-dehydro-2-deoxygluconokinase (338 aa).

Belongs to the carbohydrate kinase PfkB family.

The enzyme catalyses 5-dehydro-2-deoxy-D-gluconate + ATP = 6-phospho-5-dehydro-2-deoxy-D-gluconate + ADP + H(+). Its pathway is polyol metabolism; myo-inositol degradation into acetyl-CoA; acetyl-CoA from myo-inositol: step 5/7. Catalyzes the phosphorylation of 5-dehydro-2-deoxy-D-gluconate (2-deoxy-5-keto-D-gluconate or DKG) to 6-phospho-5-dehydro-2-deoxy-D-gluconate (DKGP). The sequence is that of 5-dehydro-2-deoxygluconokinase from Mesomycoplasma hyopneumoniae (strain J / ATCC 25934 / NCTC 10110) (Mycoplasma hyopneumoniae).